The chain runs to 308 residues: Testis-specific Y-encoded protein 8 (308 aa).

This sequence belongs to the nucleosome assembly protein (NAP) family.

The protein localises to the cytoplasm. The protein resides in the nucleus. Its function is as follows. May be involved in sperm differentiation and proliferation. This chain is Testis-specific Y-encoded protein 8 (TSPY8), found in Homo sapiens (Human).